The chain runs to 675 residues: UvrABC system protein B (675 aa).

A Helicase ATP-binding domain is found at 35–192; sequence QGMRDGLMYQ…ARLVAMQYTR (158 aa). ATP is bound at residue 48-55; that stretch reads GVTGSGKT. Residues 101–124 carry the Beta-hairpin motif; sequence YYDYYQPEAYVPTRDLFIEKDSSI. The Helicase C-terminal domain maps to 439–605; that stretch reads QVDDLLGEIK…GVNKAVRELI (167 aa). The 36-residue stretch at 633–668 folds into the UVR domain; it reads AREIRRLEKLMTDHARNLEFEQAAAARDALNALKQR.

Belongs to the UvrB family. In terms of assembly, forms a heterotetramer with UvrA during the search for lesions. Interacts with UvrC in an incision complex.

The protein resides in the cytoplasm. Functionally, the UvrABC repair system catalyzes the recognition and processing of DNA lesions. A damage recognition complex composed of 2 UvrA and 2 UvrB subunits scans DNA for abnormalities. Upon binding of the UvrA(2)B(2) complex to a putative damaged site, the DNA wraps around one UvrB monomer. DNA wrap is dependent on ATP binding by UvrB and probably causes local melting of the DNA helix, facilitating insertion of UvrB beta-hairpin between the DNA strands. Then UvrB probes one DNA strand for the presence of a lesion. If a lesion is found the UvrA subunits dissociate and the UvrB-DNA preincision complex is formed. This complex is subsequently bound by UvrC and the second UvrB is released. If no lesion is found, the DNA wraps around the other UvrB subunit that will check the other stand for damage. This Bordetella petrii (strain ATCC BAA-461 / DSM 12804 / CCUG 43448) protein is UvrABC system protein B.